Here is a 467-residue protein sequence, read N- to C-terminus: Endolysin PlyTW (467 aa).

The Peptidase C51 domain occupies Leu4 to Arg141. 2 residues coordinate Ca(2+): Asp20 and Asp22. Cys29 (for endopeptidase activity) is an active-site residue. Position 31 (Asp31) interacts with Ca(2+). Catalysis depends on for endopeptidase activity residues His92 and Glu112. Residues Ser148 to Lys169 form a disordered region. An N-acetylmuramoyl-L-alanine amidase domain is found at Asn189–His311. Zn(2+)-binding residues include His196, His301, and Cys309. The SH3b domain maps to Ser385 to Asn455.

It belongs to the N-acetylmuramoyl-L-alanine amidase 2 family. Zn(2+) serves as cofactor.

It catalyses the reaction Hydrolyzes the link between N-acetylmuramoyl residues and L-amino acid residues in certain cell-wall glycopeptides.. Endolysin that degrades host peptidoglycans and participates in the sequential events which lead to the programmed host cell lysis releasing the mature viral particles. The CHAP activity cleaves the peptidic bond between the D-alanine of the tetra-peptide stem and the first glycine of the penta-glycine cross-bridge. The N-acetyl-muramidase activity cleaves between N-acetylmuramic acid and N-acetylglucosamine bonds. This Twortvirus twort (Bacteriophage Twort) protein is Endolysin PlyTW (plyTW).